A 151-amino-acid polypeptide reads, in one-letter code: MALNSLSLSLQFGKFPDAALHRAALPRHSVARWIRHALQSDAEITVRIVGAEEGQALNRDYRAKDYATNVLTFDYTQAPYVTADLVLCAPVVAKEAQDNQKTLQAHYAHLLVHGTLHAQGYDHETGEEDAEEMEALEIEILAGLGFDNPYR.

His113, His117, and His123 together coordinate Zn(2+).

Belongs to the endoribonuclease YbeY family. Zn(2+) serves as cofactor.

The protein resides in the cytoplasm. Single strand-specific metallo-endoribonuclease involved in late-stage 70S ribosome quality control and in maturation of the 3' terminus of the 16S rRNA. The chain is Endoribonuclease YbeY from Polaromonas naphthalenivorans (strain CJ2).